The primary structure comprises 93 residues: Small ribosomal subunit protein bS6 (93 aa).

This sequence belongs to the bacterial ribosomal protein bS6 family.

In terms of biological role, binds together with bS18 to 16S ribosomal RNA. This Phytoplasma australiense protein is Small ribosomal subunit protein bS6.